The chain runs to 993 residues: Muscular LMNA-interacting protein (993 aa).

Residues 1–51 (MLSEQGLLSDCGNNYFQMTSCILSGSIQTTPQVSAGGSEAKPLIFTFVPTV) form an interaction with LMNA region. Residues 71 to 90 (PEESSDKSPETVNRSKSNDY) form a disordered region. Polar residues predominate over residues 80–90 (ETVNRSKSNDY). The residue at position 146 (Ser146) is a Phosphoserine. Disordered stretches follow at residues 152–171 (AASRKVEQGPPGGIGTAAVR), 186–225 (VRPKTQGTDLKTSSHPEMLHGMAPQQKHGQLTSSPTTSEQ), 231–250 (PAFSFVSPTNPNTPPDPVNL), 300–322 (PHSTQLSGSNLPSSTAADPKPGL), 334–358 (SHVLSHGESPRTSSSPPSSSASLKS), 443–481 (SPASSTLTLDQKEKQTPPTPKKSLSSCSLRAGSPDQGEL), 500–582 (TPLS…IHTY), 677–711 (SALHPHCGSGTLPSRLGKSESTTPNHRSPVSTPSL), and 811–864 (LSMH…SQLT). The tract at residues 161–837 (PPGGIGTAAV…GSDTVKTPTT (677 aa)) is required for interaction with ISL1. Residues 212–225 (KHGQLTSSPTTSEQ) are compositionally biased toward polar residues. A compositionally biased stretch (polar residues) spans 300 to 315 (PHSTQLSGSNLPSSTA). The segment covering 343–358 (PRTSSSPPSSSASLKS) has biased composition (low complexity). Residues 500-532 (TPLSQAPSLSPTKQASSSLASMNVERTPSPTLK) are compositionally biased toward polar residues. Low complexity predominate over residues 533–563 (SNTMLSLLQTSTSSSVGLPPVPPSSSLSSLK). The span at 564–574 (SKQDGDLRGPE) shows a compositional bias: basic and acidic residues. Polar residues predominate over residues 695-711 (SESTTPNHRSPVSTPSL). The span at 811–822 (LSMHSSDSPSRS) shows a compositional bias: low complexity. Ser818 is subject to Phosphoserine. Residues 849-864 (ANLSSPSSTVSESQLT) show a composition bias toward polar residues.

As to quaternary structure, directly interacts with LMNA. Interacts with ISL1 (via N-terminal domain); the interaction represses ISL1 transactivator activity. Interactions of ISL1 with MLIP1 and GCN5/KAT2A may be mutually exclusive. As to expression, predominantly expressed in the heart and skeletal muscle. Also detected in liver. In terms of tissue distribution, expressed in skeletal muscle.

The protein resides in the nucleus. It is found in the nucleus envelope. It localises to the PML body. Its subcellular location is the cytoplasm. The protein localises to the cytosol. The protein resides in the cell membrane. It is found in the sarcolemma. Functionally, required for myoblast differentiation into myotubes, possibly acting as a transcriptional regulator of the myogenic program. Required for cardiac adaptation to stress through integrated regulation of the AKT/mTOR pathways and FOXO1. Regulates cardiac homeostasis and plays a role in the protection against cardiac hypertrophy. Binds chromatin. May act as a transcriptional cofactor for ISL1, repressing its transcriptional activity. May also repress MYOCD transcriptional activity. This chain is Muscular LMNA-interacting protein, found in Homo sapiens (Human).